The sequence spans 377 residues: Modification methylase CviBIII (377 aa).

It belongs to the N(4)/N(6)-methyltransferase family.

It carries out the reaction a 2'-deoxyadenosine in DNA + S-adenosyl-L-methionine = an N(6)-methyl-2'-deoxyadenosine in DNA + S-adenosyl-L-homocysteine + H(+). Functionally, a gamma subtype methylase that recognizes the double-stranded sequence 5'-TCGA-3' and methylates A-4 on both strands. This Paramecium bursaria Chlorella virus NC1A (PBCV-NC1A) protein is Modification methylase CviBIII (CVIBIIIM).